The primary structure comprises 132 residues: MVMTDPIADLLTRVRNANIARHEAVEIPASNIKKAIANIMLQEGYITDLEEYNDGAVPMLKITMKYGQNKERVITGLKRISKPGLRVYCRKDEVPKVLNGLGTAVISTSKGILPDKEARKLSIGGEVLCYIW.

This sequence belongs to the universal ribosomal protein uS8 family. Part of the 30S ribosomal subunit. Contacts proteins S5 and S12.

In terms of biological role, one of the primary rRNA binding proteins, it binds directly to 16S rRNA central domain where it helps coordinate assembly of the platform of the 30S subunit. The polypeptide is Small ribosomal subunit protein uS8 (Clostridium tetani (strain Massachusetts / E88)).